Here is a 217-residue protein sequence, read N- to C-terminus: 25 kDa ookinete surface antigen (217 aa).

An N-terminal signal peptide occupies residues 1–16 (MNKLYSLFLFLFIQLS). The 30-residue stretch at 30 to 59 (CKRGFLIQMSGHLECKCENDLVLVNEETCE) folds into the EGF-like 1; truncated domain. EGF-like domains follow at residues 61–106 (KVLK…NVCI), 106–150 (IPNE…NKCS), and 153–193 (GETK…SICT). 9 disulfides stabilise this stretch: cysteine 65–cysteine 80, cysteine 74–cysteine 92, cysteine 94–cysteine 105, cysteine 110–cysteine 120, cysteine 115–cysteine 133, cysteine 135–cysteine 149, cysteine 157–cysteine 168, cysteine 161–cysteine 177, and cysteine 179–cysteine 192. N-linked (GlcNAc...) asparagine glycosylation occurs at asparagine 112. Residues asparagine 165 and asparagine 187 are each glycosylated (N-linked (GlcNAc...) asparagine). Serine 196 is lipidated: GPI-anchor amidated serine. Residues 197–217 (AYNILNLSIMFILFSVCFFIM) constitute a propeptide, removed in mature form. Residue asparagine 202 is glycosylated (N-linked (GlcNAc...) asparagine).

The protein localises to the cell membrane. This Plasmodium falciparum (isolate NF54) protein is 25 kDa ookinete surface antigen.